A 347-amino-acid polypeptide reads, in one-letter code: Ribosomal RNA small subunit methyltransferase C (347 aa).

It belongs to the methyltransferase superfamily. RsmC family. In terms of assembly, monomer.

Its subcellular location is the cytoplasm. It carries out the reaction guanosine(1207) in 16S rRNA + S-adenosyl-L-methionine = N(2)-methylguanosine(1207) in 16S rRNA + S-adenosyl-L-homocysteine + H(+). In terms of biological role, specifically methylates the guanine in position 1207 of 16S rRNA in the 30S particle. The protein is Ribosomal RNA small subunit methyltransferase C of Shewanella baltica (strain OS195).